The following is a 62-amino-acid chain: U10-hottentoxin-Hj3a (62 aa).

Residues 1 to 22 (MQKLLIILILFCILKFNVDVEG) form the signal peptide. 3 disulfide bridges follow: Cys-28–Cys-46, Cys-33–Cys-59, and Cys-37–Cys-61.

This sequence belongs to the short scorpion toxin superfamily. Potassium channel inhibitor family. Alpha-KTx 23 subfamily. Expressed by the venom gland.

The protein localises to the secreted. Its function is as follows. May block potassium channels. In Hottentotta judaicus (Black scorpion), this protein is U10-hottentoxin-Hj3a.